A 237-amino-acid polypeptide reads, in one-letter code: MKLIVNADDFGLSRGVNYGIVDAHELGIVTSTTMLTNMPATNHAFQLMEKYPKLKVGVHLTLSCGAPITTDCPTLINPQGEFRLTSQYLLLKEHGLSEEEVEAEWEAQIQQFYKRGVTPSHLDSHHHIHTWEPIIPVIKRLAQKYDLPVRTGFRNPPNGVRLWSDVIDAGFYGEGVKEKYFIELYEKFKAYDGTIEIMCHPAYIDEVLRQHSSYVEGRLKEFEMLTRIKLAEDVTLI.

Mg(2+) is bound by residues histidine 59 and histidine 125.

It belongs to the YdjC deacetylase family. Mg(2+) serves as cofactor.

Functionally, probably catalyzes the deacetylation of acetylated carbohydrates an important step in the degradation of oligosaccharides. The protein is Carbohydrate deacetylase of Halalkalibacterium halodurans (strain ATCC BAA-125 / DSM 18197 / FERM 7344 / JCM 9153 / C-125) (Bacillus halodurans).